The chain runs to 225 residues: Insulin-induced gene 2 protein (225 aa).

At 1–28 (MAEGETESPRPKKRGPYISSVTSQSVNV) the chain is on the cytoplasmic side. Residues 29-51 (VIRGVVLFFIGVFLALVLNLLQI) form a helical membrane-spanning segment. At 52–70 (QRNVTLFPPDVITSIFSSA) the chain is on the lumenal side. A helical transmembrane segment spans residues 71–88 (WWVPPCCGTASAVIGLLY). Topologically, residues 89-103 (PCIDRHLGEPHKFKR) are cytoplasmic. A helical membrane pass occupies residues 104 to 126 (EWSSVMRCVAVFVGINHASAKVD). The Lumenal segment spans residues 127-129 (FDN). A helical transmembrane segment spans residues 130 to 148 (NFQFSLTLAALSVGLWWTF). Topologically, residues 149–153 (DRSRS) are cytoplasmic. Ser151 carries the phosphoserine modification. A helical transmembrane segment spans residues 154–175 (GFGLGVGIAFLATVVTQLLVYN). Residues 176–189 (GVYQYTSPDFLYVR) lie on the Lumenal side of the membrane. The helical transmembrane segment at 190 to 207 (SWLPCIFFAGGITMGNIG) threads the bilayer. Topologically, residues 208–225 (RQLAMYECKVIAEKSHQE) are cytoplasmic. Cys215 carries the cysteine sulfenic acid (-SOH); alternate modification. A Glycyl cysteine thioester (Cys-Gly) (interchain with G-Cter in ubiquitin); alternate cross-link involves residue Cys215. The short motif at 219–225 (AEKSHQE) is the KxHxx element.

This sequence belongs to the INSIG family. Interacts with SCAP; interaction is direct and only takes place in the presence of sterols; it prevents interaction between SCAP and the coat protein complex II (COPII). Associates with the SCAP-SREBP complex (composed of SCAP and SREBF1/SREBP1 or SREBF2/SREBP2); association is mediated via its interaction with SCAP and only takes place in the presence of sterols. Interacts with RNF139. Interacts with RNF145. In terms of processing, phosphorylation at Ser-151 by PCK1 reduces binding to oxysterol, disrupting the interaction between INSIG2 and SCAP, thereby promoting nuclear translocation of SREBP proteins (SREBF1/SREBP1 or SREBF2/SREBP2) and subsequent transcription of downstream lipogenesis-related genes. Post-translationally, polyubiquitinated by AMFR/gp78 at Cys-215 in some tissues such as adipose tissues, undifferentiated myoblasts and liver, leading to its degradation. In differentiated myotubes, Cys-215 oxidation prevents ubiquitination at the same site, resulting in protein stabilization. Oxidized at Cys-215 in differentiated myotubes, preventing ubiquitination at the same site, and resulting in protein stabilization.

It is found in the endoplasmic reticulum membrane. Functionally, oxysterol-binding protein that mediates feedback control of cholesterol synthesis by controlling both endoplasmic reticulum to Golgi transport of SCAP and degradation of HMGCR. Acts as a negative regulator of cholesterol biosynthesis by mediating the retention of the SCAP-SREBP complex in the endoplasmic reticulum, thereby blocking the processing of sterol regulatory element-binding proteins (SREBPs) SREBF1/SREBP1 and SREBF2/SREBP2. Binds oxysterol, including 22-hydroxycholesterol, 24-hydroxycholesterol, 25-hydroxycholesterol and 27-hydroxycholesterol, regulating interaction with SCAP and retention of the SCAP-SREBP complex in the endoplasmic reticulum. In presence of oxysterol, interacts with SCAP, retaining the SCAP-SREBP complex in the endoplasmic reticulum, thereby preventing SCAP from escorting SREBF1/SREBP1 and SREBF2/SREBP2 to the Golgi. Sterol deprivation or phosphorylation by PCK1 reduce oxysterol-binding, disrupting the interaction between INSIG2 and SCAP, thereby promoting Golgi transport of the SCAP-SREBP complex, followed by processing and nuclear translocation of SREBF1/SREBP1 and SREBF2/SREBP2. Also regulates cholesterol synthesis by regulating degradation of HMGCR: initiates the sterol-mediated ubiquitin-mediated endoplasmic reticulum-associated degradation (ERAD) of HMGCR via recruitment of the reductase to the ubiquitin ligase RNF139. This chain is Insulin-induced gene 2 protein, found in Rattus norvegicus (Rat).